The chain runs to 218 residues: 7-cyano-7-deazaguanine synthase (218 aa).

Position 9-19 (9-19 (FSGGMDSFTVL)) interacts with ATP. Residues C185, C193, C196, and C199 each contribute to the Zn(2+) site.

This sequence belongs to the QueC family. Requires Zn(2+) as cofactor.

It carries out the reaction 7-carboxy-7-deazaguanine + NH4(+) + ATP = 7-cyano-7-deazaguanine + ADP + phosphate + H2O + H(+). It functions in the pathway purine metabolism; 7-cyano-7-deazaguanine biosynthesis. Its function is as follows. Catalyzes the ATP-dependent conversion of 7-carboxy-7-deazaguanine (CDG) to 7-cyano-7-deazaguanine (preQ(0)). The chain is 7-cyano-7-deazaguanine synthase from Pseudoalteromonas atlantica (strain T6c / ATCC BAA-1087).